Here is a 184-residue protein sequence, read N- to C-terminus: Thymidine kinase (184 aa).

Residues 10-17 (GPMYSGKT) and 83-86 (DEVQ) each bind ATP. The active-site Proton acceptor is Glu84. Zn(2+) contacts are provided by Cys140, Cys143, Cys173, and Cys176.

This sequence belongs to the thymidine kinase family. As to quaternary structure, homotetramer.

Its subcellular location is the cytoplasm. The enzyme catalyses thymidine + ATP = dTMP + ADP + H(+). The chain is Thymidine kinase from Thermotoga petrophila (strain ATCC BAA-488 / DSM 13995 / JCM 10881 / RKU-1).